The sequence spans 705 residues: tRNA 5-methylaminomethyl-2-thiouridine biosynthesis bifunctional protein MnmC (705 aa).

The interval 1–241 is tRNA (mnm(5)s(2)U34)-methyltransferase; the sequence is MTIKTADIQF…KREMLAGIIA (241 aa). Residues 289–705 form an FAD-dependent cmnm(5)s(2)U34 oxidoreductase region; the sequence is IGAGIAGASM…LIRQLIRREV (417 aa).

The protein in the N-terminal section; belongs to the methyltransferase superfamily. tRNA (mnm(5)s(2)U34)-methyltransferase family. It in the C-terminal section; belongs to the DAO family. FAD is required as a cofactor.

The protein resides in the cytoplasm. It carries out the reaction 5-aminomethyl-2-thiouridine(34) in tRNA + S-adenosyl-L-methionine = 5-methylaminomethyl-2-thiouridine(34) in tRNA + S-adenosyl-L-homocysteine + H(+). Functionally, catalyzes the last two steps in the biosynthesis of 5-methylaminomethyl-2-thiouridine (mnm(5)s(2)U) at the wobble position (U34) in tRNA. Catalyzes the FAD-dependent demodification of cmnm(5)s(2)U34 to nm(5)s(2)U34, followed by the transfer of a methyl group from S-adenosyl-L-methionine to nm(5)s(2)U34, to form mnm(5)s(2)U34. This is tRNA 5-methylaminomethyl-2-thiouridine biosynthesis bifunctional protein MnmC from Pseudoalteromonas atlantica (strain T6c / ATCC BAA-1087).